Consider the following 291-residue polypeptide: 33 kDa chaperonin (291 aa).

2 disulfide bridges follow: cysteine 229–cysteine 231 and cysteine 262–cysteine 265.

It belongs to the HSP33 family. Post-translationally, under oxidizing conditions two disulfide bonds are formed involving the reactive cysteines. Under reducing conditions zinc is bound to the reactive cysteines and the protein is inactive.

It is found in the cytoplasm. Functionally, redox regulated molecular chaperone. Protects both thermally unfolding and oxidatively damaged proteins from irreversible aggregation. Plays an important role in the bacterial defense system toward oxidative stress. The sequence is that of 33 kDa chaperonin from Vibrio vulnificus (strain YJ016).